Consider the following 275-residue polypeptide: Lacto-N-neotetraose biosynthesis glycosyltransferase LgtB (275 aa).

The protein belongs to the glycosyltransferase 25 family.

It functions in the pathway glycan metabolism; lacto-N-neotetraose biosynthesis. It participates in bacterial outer membrane biogenesis; lipooligosaccharide biosynthesis. In terms of biological role, adds the second galactose to the lacto-N-tetraose chain in lipooligosaccharide (LOS). The polypeptide is Lacto-N-neotetraose biosynthesis glycosyltransferase LgtB (lgtB) (Neisseria meningitidis serogroup B (strain ATCC BAA-335 / MC58)).